A 458-amino-acid chain; its full sequence is Sulfite exporter TauE/SafE family protein 2 (458 aa).

12 helical membrane-spanning segments follow: residues 5–25 (FVPI…EQEP), 53–73 (IELT…SSIS), 74–94 (SAGG…VAGL), 101–121 (SFSA…NLFV), 128–148 (GKTL…LLGV), 150–170 (IGVI…FAVF), 227–247 (FPWI…AVYL), 267–287 (YWLI…WICF), 324–344 (VMAL…GMLI), 348–368 (LLQV…MVLF), 386–406 (GTAS…LKVV), and 418–438 (IIVF…TSYG).

It belongs to the 4-toluene sulfonate uptake permease (TSUP) (TC 2.A.102) family.

The protein resides in the membrane. The polypeptide is Sulfite exporter TauE/SafE family protein 2 (Arabidopsis thaliana (Mouse-ear cress)).